The following is a 352-amino-acid chain: Glycerol-1-phosphate dehydrogenase [NAD(P)+] (352 aa).

Residues 99 to 103 (GTKID) and 121 to 124 (TSPS) each bind NAD(+). Aspartate 126 contacts substrate. Serine 130 provides a ligand contact to NAD(+). Aspartate 173 is a binding site for substrate. Positions 173 and 253 each coordinate Zn(2+). Histidine 257 serves as a coordination point for substrate. Histidine 269 contributes to the Zn(2+) binding site.

This sequence belongs to the glycerol-1-phosphate dehydrogenase family. Zn(2+) serves as cofactor.

It is found in the cytoplasm. It catalyses the reaction sn-glycerol 1-phosphate + NAD(+) = dihydroxyacetone phosphate + NADH + H(+). The catalysed reaction is sn-glycerol 1-phosphate + NADP(+) = dihydroxyacetone phosphate + NADPH + H(+). It functions in the pathway membrane lipid metabolism; glycerophospholipid metabolism. Catalyzes the NAD(P)H-dependent reduction of dihydroxyacetonephosphate (DHAP or glycerone phosphate) to glycerol 1-phosphate (G1P). The G1P thus generated is used as the glycerophosphate backbone of phospholipids in the cellular membranes of Archaea. This is Glycerol-1-phosphate dehydrogenase [NAD(P)+] from Thermoplasma volcanium (strain ATCC 51530 / DSM 4299 / JCM 9571 / NBRC 15438 / GSS1).